The chain runs to 206 residues: MARGKFITFEGIDGAGKTTHLQWFCERLQAKLAAGDRQVVVTREPGGTPLGEALREMLLNQPMDLETEALLMFAARREHLARVIEPALARGDWVVSDRFTDATFAYQGGGRGLPRDKLEALERWVQGGFQPDLTVLFDVAPQVASERRGAARAPDKFESETDAFFTRTRDEYLRRAQEAPHRFTIVDATQTIPEIRGRLERVLAAL.

11 to 18 (GIDGAGKT) serves as a coordination point for ATP.

Belongs to the thymidylate kinase family.

The enzyme catalyses dTMP + ATP = dTDP + ADP. Its function is as follows. Phosphorylation of dTMP to form dTDP in both de novo and salvage pathways of dTTP synthesis. The protein is Thymidylate kinase of Burkholderia vietnamiensis (strain G4 / LMG 22486) (Burkholderia cepacia (strain R1808)).